Consider the following 30-residue polypeptide: L-serine dehydratase, alpha chain (30 aa).

This sequence belongs to the iron-sulfur dependent L-serine dehydratase family. As to quaternary structure, heterodimer of an alpha chain and a beta chain. [4Fe-4S] cluster is required as a cofactor.

The enzyme catalyses L-serine = pyruvate + NH4(+). Its pathway is carbohydrate biosynthesis; gluconeogenesis. This is L-serine dehydratase, alpha chain from Anaerotignum propionicum (Clostridium propionicum).